A 70-amino-acid polypeptide reads, in one-letter code: Sec-independent protein translocase protein TatA (70 aa).

Residues 1 to 21 (MGSFSIWHWLIVLVVVLLIFG) traverse the membrane as a helical segment. Positions 46–70 (DAPKISESDKGGHTIDAEVKDKQNS) are disordered.

It belongs to the TatA/E family. The Tat system comprises two distinct complexes: a TatABC complex, containing multiple copies of TatA, TatB and TatC subunits, and a separate TatA complex, containing only TatA subunits. Substrates initially bind to the TatABC complex, which probably triggers association of the separate TatA complex to form the active translocon.

Its subcellular location is the cell inner membrane. Its function is as follows. Part of the twin-arginine translocation (Tat) system that transports large folded proteins containing a characteristic twin-arginine motif in their signal peptide across membranes. TatA could form the protein-conducting channel of the Tat system. This chain is Sec-independent protein translocase protein TatA, found in Thiobacillus denitrificans (strain ATCC 25259 / T1).